A 302-amino-acid chain; its full sequence is Probable WRKY transcription factor 40 (302 aa).

Positions 140–206 form a DNA-binding region, WRKY; sequence DTTLVVKDGY…YEGEHNHPMP (67 aa).

It belongs to the WRKY group III family.

The protein localises to the nucleus. Transcription factor. Interacts specifically with the W box (5'-(T)TGAC[CT]-3'), a frequently occurring elicitor-responsive cis-acting element. This is Probable WRKY transcription factor 40 from Arabidopsis thaliana (Mouse-ear cress).